The following is a 500-amino-acid chain: L-arabinose isomerase (500 aa).

Positions 306, 333, 349, and 448 each coordinate Mn(2+).

It belongs to the arabinose isomerase family. The cofactor is Mn(2+).

It carries out the reaction beta-L-arabinopyranose = L-ribulose. The protein operates within carbohydrate degradation; L-arabinose degradation via L-ribulose; D-xylulose 5-phosphate from L-arabinose (bacterial route): step 1/3. Its function is as follows. Catalyzes the conversion of L-arabinose to L-ribulose. This is L-arabinose isomerase from Koribacter versatilis (strain Ellin345).